We begin with the raw amino-acid sequence, 101 residues long: Aspartyl/glutamyl-tRNA(Asn/Gln) amidotransferase subunit C (101 aa).

The protein belongs to the GatC family. Heterotrimer of A, B and C subunits.

The enzyme catalyses L-glutamyl-tRNA(Gln) + L-glutamine + ATP + H2O = L-glutaminyl-tRNA(Gln) + L-glutamate + ADP + phosphate + H(+). It catalyses the reaction L-aspartyl-tRNA(Asn) + L-glutamine + ATP + H2O = L-asparaginyl-tRNA(Asn) + L-glutamate + ADP + phosphate + 2 H(+). Functionally, allows the formation of correctly charged Asn-tRNA(Asn) or Gln-tRNA(Gln) through the transamidation of misacylated Asp-tRNA(Asn) or Glu-tRNA(Gln) in organisms which lack either or both of asparaginyl-tRNA or glutaminyl-tRNA synthetases. The reaction takes place in the presence of glutamine and ATP through an activated phospho-Asp-tRNA(Asn) or phospho-Glu-tRNA(Gln). This Lactococcus lactis subsp. cremoris (strain MG1363) protein is Aspartyl/glutamyl-tRNA(Asn/Gln) amidotransferase subunit C.